Consider the following 66-residue polypeptide: Small ribosomal subunit protein bS21 (66 aa).

Belongs to the bacterial ribosomal protein bS21 family.

The chain is Small ribosomal subunit protein bS21 from Solidesulfovibrio magneticus (strain ATCC 700980 / DSM 13731 / RS-1) (Desulfovibrio magneticus).